The following is a 432-amino-acid chain: 3-phosphoshikimate 1-carboxyvinyltransferase (432 aa).

Residues Lys-23, Ser-24, and Arg-28 each contribute to the 3-phosphoshikimate site. Residue Lys-23 coordinates phosphoenolpyruvate. Phosphoenolpyruvate is bound by residues Gly-95 and Arg-123. Residues Ser-167, Gln-169, Asp-317, and Lys-344 each contribute to the 3-phosphoshikimate site. Residue Gln-169 coordinates phosphoenolpyruvate. The active-site Proton acceptor is Asp-317. Phosphoenolpyruvate is bound by residues Arg-348 and Arg-390.

It belongs to the EPSP synthase family. Monomer.

The protein localises to the cytoplasm. It carries out the reaction 3-phosphoshikimate + phosphoenolpyruvate = 5-O-(1-carboxyvinyl)-3-phosphoshikimate + phosphate. It participates in metabolic intermediate biosynthesis; chorismate biosynthesis; chorismate from D-erythrose 4-phosphate and phosphoenolpyruvate: step 6/7. Functionally, catalyzes the transfer of the enolpyruvyl moiety of phosphoenolpyruvate (PEP) to the 5-hydroxyl of shikimate-3-phosphate (S3P) to produce enolpyruvyl shikimate-3-phosphate and inorganic phosphate. The polypeptide is 3-phosphoshikimate 1-carboxyvinyltransferase (Staphylococcus saprophyticus subsp. saprophyticus (strain ATCC 15305 / DSM 20229 / NCIMB 8711 / NCTC 7292 / S-41)).